Consider the following 145-residue polypeptide: Peptide methionine sulfoxide reductase MsrB (145 aa).

The 124-residue stretch at Ser4–Tyr127 folds into the MsrB domain. The active-site Nucleophile is the Cys116.

It belongs to the MsrB Met sulfoxide reductase family.

The enzyme catalyses L-methionyl-[protein] + [thioredoxin]-disulfide + H2O = L-methionyl-(R)-S-oxide-[protein] + [thioredoxin]-dithiol. This is Peptide methionine sulfoxide reductase MsrB from Streptococcus pyogenes serotype M3 (strain ATCC BAA-595 / MGAS315).